The chain runs to 465 residues: ATP synthase subunit beta (465 aa).

152–159 (GGAGVGKT) is a binding site for ATP.

It belongs to the ATPase alpha/beta chains family. As to quaternary structure, F-type ATPases have 2 components, CF(1) - the catalytic core - and CF(0) - the membrane proton channel. CF(1) has five subunits: alpha(3), beta(3), gamma(1), delta(1), epsilon(1). CF(0) has three main subunits: a(1), b(2) and c(9-12). The alpha and beta chains form an alternating ring which encloses part of the gamma chain. CF(1) is attached to CF(0) by a central stalk formed by the gamma and epsilon chains, while a peripheral stalk is formed by the delta and b chains.

It localises to the cell inner membrane. The enzyme catalyses ATP + H2O + 4 H(+)(in) = ADP + phosphate + 5 H(+)(out). Produces ATP from ADP in the presence of a proton gradient across the membrane. The catalytic sites are hosted primarily by the beta subunits. The polypeptide is ATP synthase subunit beta (Campylobacter hominis (strain ATCC BAA-381 / DSM 21671 / CCUG 45161 / LMG 19568 / NCTC 13146 / CH001A)).